We begin with the raw amino-acid sequence, 417 residues long: Putative transporter AmpG 1 (417 aa).

Transmembrane regions (helical) follow at residues 7-27 (LCIIWLFGLISGFNLMITGNT), 42-62 (IGILSFITLPYSINFLLAPIF), 78-98 (LSWICLTSSALIFLIYIFSFL), 104-124 (LLLFAFTALIISFFSAAQDTI), 143-163 (GIYIFGYRVGMLLAGSGAIYL), 171-191 (EIYKIFAGLVFIYLILLIVGI), 225-245 (ALKPIGSVYFIILILIFLVLY), 273-293 (VGKFCGVVGAIIGGLVGGVIM), 301-321 (SIFLFGIIHALGHILFIFLEI), 328-348 (LLFITIGIASITGGMTMTAYI), 366-386 (FLSSMMGISRSIFPIISGYMV), and 389-409 (FGWQNFFLFTTIITIPSLLIL).

The protein belongs to the major facilitator superfamily.

It is found in the cell inner membrane. In Rickettsia conorii (strain ATCC VR-613 / Malish 7), this protein is Putative transporter AmpG 1 (ampG1).